The chain runs to 213 residues: Glutathione S-transferase APIC (213 aa).

The GST N-terminal domain maps to Met1 to Gly82. Glutathione-binding positions include Ser11, Thr12–Ala13, His40–Lys41, Gln53–Val54, and Glu66–Ser67. Residues Asp89–Lys213 form the GST C-terminal domain.

This sequence belongs to the GST superfamily. Phi family.

It catalyses the reaction RX + glutathione = an S-substituted glutathione + a halide anion + H(+). Its function is as follows. Conjugation of reduced glutathione to a wide number of exogenous and endogenous hydrophobic electrophiles. The polypeptide is Glutathione S-transferase APIC (Nicotiana tabacum (Common tobacco)).